The following is a 428-amino-acid chain: UPF0053 inner membrane protein YfjD (428 aa).

The Cytoplasmic portion of the chain corresponds to 1–3; it reads MEH. The 191-residue stretch at 2-192 folds into the CNNM transmembrane domain; it reads EHISTTTLII…SQISRRNQDM (191 aa). A helical membrane pass occupies residues 4-24; the sequence is ISTTTLIIILIIMVVISAYFS. Residues 25 to 64 lie on the Periplasmic side of the membrane; the sequence is GSETGMMTLNRYRLRHMAKQGNRSAKRVEKLLRKPDRLIS. A helical transmembrane segment spans residues 65 to 85; that stretch reads LVLIGNNLVNILASALGTIVG. The Cytoplasmic portion of the chain corresponds to 86 to 91; sequence MRLYGD. A helical membrane pass occupies residues 92-112; the sequence is AGVAIATGVLTFVVLVFAEVL. Over 113–129 the chain is Periplasmic; that stretch reads PKTIAALYPEKVAYPSS. The helical transmembrane segment at 130–150 threads the bilayer; it reads FLLAPLQILMMPLVWLLNAIT. Topologically, residues 151–428 are cytoplasmic; the sequence is RMLMRMMGIK…VKPLRESVAE (278 aa). CBS domains lie at 208-270 and 272-332; these read MVPR…FTKE and MLRA…FTTS.

Belongs to the UPF0053 family.

It localises to the cell inner membrane. The polypeptide is UPF0053 inner membrane protein YfjD (yfjD) (Escherichia coli (strain K12)).